The following is a 168-amino-acid chain: Venom nerve growth factor (168 aa).

The first 18 residues, 1-18 (MSMLCYTLIIAFLIGIWA), serve as a signal peptide directing secretion. The propeptide occupies 19 to 123 (APKSEDNVSL…ADSLNRNIRA (105 aa)). Asparagine 25 is a glycosylation site (N-linked (GlcNAc...) asparagine). The disordered stretch occupies residues 48–70 (LKTSQNTDQHSPAPKKAEDQEFG). Asparagine 148 is a glycosylation site (N-linked (GlcNAc...) asparagine).

Belongs to the NGF-beta family. As to quaternary structure, homodimer; non-covalently linked. Expressed by the venom gland.

It is found in the secreted. Its function is as follows. Nerve growth factor is important for the development and maintenance of the sympathetic and sensory nervous systems. It stimulates division and differentiation of sympathetic and embryonic sensory neurons as well as basal forebrain cholinergic neurons in the brain. Its relevance in the snake venom is not clear. However, it has been shown to inhibit metalloproteinase-dependent proteolysis of platelet glycoprotein Ib alpha, suggesting a metalloproteinase inhibition to prevent metalloprotease autodigestion and/or protection against prey proteases. The chain is Venom nerve growth factor from Echis ocellatus (Ocellated saw-scaled viper).